The primary structure comprises 530 residues: Type II methyltransferase M.MjaII (530 aa).

The protein belongs to the N(4)/N(6)-methyltransferase family. N(4) subfamily.

It carries out the reaction a 2'-deoxycytidine in DNA + S-adenosyl-L-methionine = an N(4)-methyl-2'-deoxycytidine in DNA + S-adenosyl-L-homocysteine + H(+). In terms of biological role, an alpha subtype methylase that recognizes the double-stranded sequence 5'-GGNCC-3', methylates C-5 on both strands, and protects the DNA from cleavage by the MjaII endonuclease. This Methanocaldococcus jannaschii (strain ATCC 43067 / DSM 2661 / JAL-1 / JCM 10045 / NBRC 100440) (Methanococcus jannaschii) protein is Type II methyltransferase M.MjaII (mjaIIM).